A 131-amino-acid chain; its full sequence is Large ribosomal subunit protein bL17 (131 aa).

The protein belongs to the bacterial ribosomal protein bL17 family. In terms of assembly, part of the 50S ribosomal subunit. Contacts protein L32.

The sequence is that of Large ribosomal subunit protein bL17 from Cupriavidus necator (strain ATCC 17699 / DSM 428 / KCTC 22496 / NCIMB 10442 / H16 / Stanier 337) (Ralstonia eutropha).